Reading from the N-terminus, the 276-residue chain is Pyridinium-3,5-bisthiocarboxylic acid mononucleotide synthase (276 aa).

The Nucleophile and sulfur donor role is filled by cysteine 176. Cysteine 176 carries the 2,3-didehydroalanine (Cys) modification.

It belongs to the LarE family.

It carries out the reaction pyridinium-3,5-dicarboxylate mononucleotide + [LarE protein]-L-cysteine + ATP = [LarE protein]-dehydroalanine + pyridinium-3-carboxylate-5-thiocarboxylate mononucleotide + AMP + diphosphate + H(+). The catalysed reaction is [LarE protein]-L-cysteine + pyridinium-3-carboxylate-5-thiocarboxylate mononucleotide + ATP = pyridinium-3,5-bisthiocarboxylate mononucleotide + [LarE protein]-dehydroalanine + AMP + diphosphate + H(+). Involved in the biosynthesis of a nickel-pincer cofactor ((SCS)Ni(II) pincer complex). Catalyzes the ATP-dependent incorporation of two sulfur atoms in pyridinium-3,5-biscarboxylic acid mononucleotide (P2CMN) to yield pyridinium-3,5-bisthiocarboxylic acid mononucleotide (P2TMN). The source of sulfur is the enzyme itself: Cys-176 of LarE is the sulfur donor, thereby being converted into dehydroalanine, and is not regenerated in vivo. Thus, two molecules of LarE undergo sacrificial sulfur transfer to create one P2TMN. Binds nickel. Is required for the activation of the lactate racemase LarA. May also be involved in the activation of other nickel-pincer cofactor-dependent enzymes. This Lactiplantibacillus plantarum (strain ATCC BAA-793 / NCIMB 8826 / WCFS1) (Lactobacillus plantarum) protein is Pyridinium-3,5-bisthiocarboxylic acid mononucleotide synthase.